The following is a 359-amino-acid chain: Endosome-associated-trafficking regulator 1 (359 aa).

A phosphoserine mark is found at Ser18 and Ser74. The required for interaction with PTPN13 stretch occupies residues 100 to 125 (LLDEDEDEEDGWNGAYLPSAMEQTHS). Positions 153 to 180 (SLPPWTLSDSDSRISPTGSPSADFTAHG) are disordered. A compositionally biased stretch (polar residues) spans 159–174 (LSDSDSRISPTGSPSA). A phosphoserine mark is found at Ser167 and Ser171. Positions 185–295 (DRHLRTLQIS…FKRENEALRS (111 aa)) form a coiled coil.

This sequence belongs to the ENTR1 family. As to quaternary structure, found in a complex with ENTR1, PTPN13 and GIT1. Interacts with PTPN13 (via the FERM domain). Interacts (via N-terminus) with GIT1 (via N- and C-terminus); this interaction is direct. Interacts with NOD2. Interacts (via N-terminus) with IFT88. Interacts with VPS35. Post-translationally, phosphorylated.

It is found in the cytoplasm. The protein resides in the early endosome. The protein localises to the endosome. It localises to the recycling endosome. Its subcellular location is the midbody. It is found in the cytoskeleton. The protein resides in the microtubule organizing center. The protein localises to the centrosome. It localises to the cilium basal body. In terms of biological role, endosome-associated protein that plays a role in membrane receptor sorting, cytokinesis and ciliogenesis. Involved in the endosome-to-plasma membrane trafficking and recycling of SNX27-retromer-dependent cargo proteins, such as GLUT1. Involved in the regulation of cytokinesis; the function may involve PTPN13 and GIT1. Plays a role in the formation of cilia. Involved in cargo protein localization, such as PKD2, at primary cilia. Involved in the presentation of the tumor necrosis factor (TNF) receptor TNFRSF1A on the cell surface, and hence in the modulation of the TNF-induced apoptosis. The sequence is that of Endosome-associated-trafficking regulator 1 from Bos taurus (Bovine).